We begin with the raw amino-acid sequence, 285 residues long: Bifunctional protein FolD (285 aa).

Residues 166 to 168 (GAS) and isoleucine 232 each bind NADP(+).

It belongs to the tetrahydrofolate dehydrogenase/cyclohydrolase family. In terms of assembly, homodimer.

It catalyses the reaction (6R)-5,10-methylene-5,6,7,8-tetrahydrofolate + NADP(+) = (6R)-5,10-methenyltetrahydrofolate + NADPH. It carries out the reaction (6R)-5,10-methenyltetrahydrofolate + H2O = (6R)-10-formyltetrahydrofolate + H(+). It functions in the pathway one-carbon metabolism; tetrahydrofolate interconversion. Catalyzes the oxidation of 5,10-methylenetetrahydrofolate to 5,10-methenyltetrahydrofolate and then the hydrolysis of 5,10-methenyltetrahydrofolate to 10-formyltetrahydrofolate. This Aliivibrio fischeri (strain MJ11) (Vibrio fischeri) protein is Bifunctional protein FolD.